We begin with the raw amino-acid sequence, 242 residues long: Pyridoxine 5'-phosphate synthase (242 aa).

Asparagine 6 lines the 3-amino-2-oxopropyl phosphate pocket. Aspartate 8 to histidine 9 lines the 1-deoxy-D-xylulose 5-phosphate pocket. Arginine 17 provides a ligand contact to 3-amino-2-oxopropyl phosphate. Histidine 42 functions as the Proton acceptor in the catalytic mechanism. The 1-deoxy-D-xylulose 5-phosphate site is built by arginine 44 and histidine 49. The active-site Proton acceptor is glutamate 69. Residue threonine 99 coordinates 1-deoxy-D-xylulose 5-phosphate. The active-site Proton donor is histidine 190. 3-amino-2-oxopropyl phosphate-binding positions include glycine 191 and glycine 212–histidine 213.

It belongs to the PNP synthase family. Homooctamer; tetramer of dimers.

Its subcellular location is the cytoplasm. The enzyme catalyses 3-amino-2-oxopropyl phosphate + 1-deoxy-D-xylulose 5-phosphate = pyridoxine 5'-phosphate + phosphate + 2 H2O + H(+). Its pathway is cofactor biosynthesis; pyridoxine 5'-phosphate biosynthesis; pyridoxine 5'-phosphate from D-erythrose 4-phosphate: step 5/5. Catalyzes the complicated ring closure reaction between the two acyclic compounds 1-deoxy-D-xylulose-5-phosphate (DXP) and 3-amino-2-oxopropyl phosphate (1-amino-acetone-3-phosphate or AAP) to form pyridoxine 5'-phosphate (PNP) and inorganic phosphate. The chain is Pyridoxine 5'-phosphate synthase from Neisseria meningitidis serogroup A / serotype 4A (strain DSM 15465 / Z2491).